We begin with the raw amino-acid sequence, 372 residues long: Probable arabinan endo-1,5-alpha-L-arabinosidase B (372 aa).

The N-terminal stretch at 1-16 (MTVLVALFCLVTWTLC) is a signal peptide. The segment covering 23–34 (STQGTQQPQQPE) has biased composition (low complexity). Residues 23-52 (STQGTQQPQQPEKTPHPHPQPEDAFPPTHA) form a disordered region. The Proton acceptor role is filled by D59. N-linked (GlcNAc...) asparagine glycosylation occurs at N120. E252 serves as the catalytic Proton donor. N363 carries N-linked (GlcNAc...) asparagine glycosylation.

This sequence belongs to the glycosyl hydrolase 43 family.

It is found in the secreted. It catalyses the reaction Endohydrolysis of (1-&gt;5)-alpha-arabinofuranosidic linkages in (1-&gt;5)-arabinans.. It functions in the pathway glycan metabolism; L-arabinan degradation. In terms of biological role, endo-1,5-alpha-L-arabinanase involved in degradation of pectin. Its preferred substrate is linear 1,5-alpha-L-arabinan. The protein is Probable arabinan endo-1,5-alpha-L-arabinosidase B (abnB) of Aspergillus fumigatus (strain CBS 144.89 / FGSC A1163 / CEA10) (Neosartorya fumigata).